The following is a 196-amino-acid chain: Sesquiterpene phosphatase astK (196 aa).

It belongs to the HAD-like hydrolase superfamily.

It catalyses the reaction (S,S)-drim-8-en-11-yl phosphate + H2O = (S,S)-drim-8-en-11-ol + phosphate. It functions in the pathway secondary metabolite biosynthesis; terpenoid biosynthesis. In terms of biological role, sesquiterpene phosphatase; part of the gene cluster that mediates the biosynthesis of astellolides, drimane-type sesquiterpene esters that show antimicrobial, anti-inflammatory, and anti-tumor activities. The first step in astellolide biosynthesis is performed by the sesquiterpene cyclase astC that catalyzes the formation of drimanyl pyrophosphate from farnesyl pyrophosphate. Drimanyl pyrophosphate is then dephosphorylated by the sesquiterpene phosphatase astI to produce drimanyl monophosphate which is further dephosphorylated to drim-8-ene-11-ol by atsK. Drim-8-ene-11-ol is converted to confertifolin, probably by the cytochrome P450 monooxygenase astD and/or the dehydrogenase astE. The cytochrome P450 monooxygenases astB, astF and astJ then hydroxylate confertifolin at C6, C14, or C15 to form trihydroxy confertifolin. The nonribosomal peptide synthetase astA catalyzes ester bond formation between trihydroxy contifolin and benzoic acid (BA) or 4-hydroxy benzoic acid (4HBA), leading to the formation of dideacetyl astellolides A and B, respectively. Finally, the O-acetyltransferase astG converts dideacetyl astellolides A and B into deacetyl astellolides A and B. The polypeptide is Sesquiterpene phosphatase astK (Aspergillus oryzae (strain ATCC 42149 / RIB 40) (Yellow koji mold)).